We begin with the raw amino-acid sequence, 82 residues long: uncharacterized protein (82 aa).

The next 2 membrane-spanning stretches (helical) occupy residues 8–28 (LLSA…LPAP) and 50–70 (LYTV…YLVL).

It localises to the cell membrane. This is an uncharacterized protein from Klebsiella pneumoniae.